Consider the following 248-residue polypeptide: MHRPLPIKKILRYARNLLIFFFASTILAVIVYRFMPVYVTPLMVIRSVQQLASGDKPTWKHTWVSFDKISPHLPMAVIASEDNRFAEHNGFDFIEIEKAMKENEKRKRKRGASTISQQTAKNVFLWPQSSWVRKGFEVYFTFLIELFWSKERIMEVYLNSIEMGKGIYGAQATAKYKFNTTAAKLSSGQCALIAATLPNPIRFNSAKPSAYLLKRQKQILRLMNLVPKFPPVEKKAVDKKDTRKKKKK.

The helical transmembrane segment at 17–37 (LLIFFFASTILAVIVYRFMPV) threads the bilayer.

The protein belongs to the glycosyltransferase 51 family.

Its subcellular location is the cell inner membrane. It carries out the reaction [GlcNAc-(1-&gt;4)-Mur2Ac(oyl-L-Ala-gamma-D-Glu-L-Lys-D-Ala-D-Ala)](n)-di-trans,octa-cis-undecaprenyl diphosphate + beta-D-GlcNAc-(1-&gt;4)-Mur2Ac(oyl-L-Ala-gamma-D-Glu-L-Lys-D-Ala-D-Ala)-di-trans,octa-cis-undecaprenyl diphosphate = [GlcNAc-(1-&gt;4)-Mur2Ac(oyl-L-Ala-gamma-D-Glu-L-Lys-D-Ala-D-Ala)](n+1)-di-trans,octa-cis-undecaprenyl diphosphate + di-trans,octa-cis-undecaprenyl diphosphate + H(+). The protein operates within cell wall biogenesis; peptidoglycan biosynthesis. In terms of biological role, peptidoglycan polymerase that catalyzes glycan chain elongation from lipid-linked precursors. This chain is Biosynthetic peptidoglycan transglycosylase, found in Bacteroides thetaiotaomicron (strain ATCC 29148 / DSM 2079 / JCM 5827 / CCUG 10774 / NCTC 10582 / VPI-5482 / E50).